A 275-amino-acid polypeptide reads, in one-letter code: Prohibitin-1 (275 aa).

Positions Tyr-106–Leu-109 match the AIM motif.

This sequence belongs to the prohibitin family. The mitochondrial prohibitin complex consists of two subunits (PHB1 and PHB2). The subunits assemble into a membrane-associated ring-shaped supercomplex of approximately 1 mDa. Interacts with ATG24/SNX4; the interaction is direct and plays a role in mitophagy.

The protein resides in the mitochondrion inner membrane. Prohibitin probably acts as a holdase/unfoldase for the stabilization of newly synthesized mitochondrial proteins. Involved in mitophagy. Required for the switch to necrotrophic growth. In Colletotrichum higginsianum (strain IMI 349063) (Crucifer anthracnose fungus), this protein is Prohibitin-1.